The sequence spans 465 residues: uncharacterized protein (465 aa).

An RAMA domain is found at 6–91 (NVTLSNLIDF…LKLKREYLFR (86 aa)). 2 disordered regions span residues 95–377 (TGKN…SNNQ) and 392–465 (YNQQ…KSKS). The span at 117-137 (PQQQQQQQQQQQQQQQQQQQP) shows a compositional bias: low complexity. A compositionally biased stretch (acidic residues) spans 156-169 (ETSDQDIDNDDDDA). Residues 177 to 190 (TTTTTTTTTTTTTT) are compositionally biased toward low complexity. Over residues 208-220 (PKEKKKEKKENIL) the composition is skewed to basic and acidic residues. Positions 214–242 (EKKENILTKKKQQSLQYQQQLQLLQRQNS) form a coiled coil. Residues 226 to 263 (QSLQYQQQLQLLQRQNSPPSVSPSSSTSTSSSTSSPAS) show a composition bias toward low complexity. A compositionally biased stretch (polar residues) spans 264–294 (NQIFNSFGPNSQNHNQYGINYNSQQHQPQQY). Residues 295–376 (NNNNNNNNNN…NNNINNNSNN (82 aa)) show a composition bias toward low complexity. The segment covering 392–407 (YNQQNPPKHQYPNNFL) has biased composition (polar residues). Over residues 424 to 442 (NQSQNQNQNQNQNQNQNQK) the composition is skewed to low complexity. The span at 443 to 465 (SKSKSKSKSKFKSKSKSKSKSKS) shows a compositional bias: basic residues.

This is an uncharacterized protein from Dictyostelium discoideum (Social amoeba).